The following is a 92-amino-acid chain: MRNGPRVQPNGERAIVQIVVRDNNVEQALRALKKKMQREGTFREMKRRNHYEKPSEKKARQKAEAIRRARKLARKRAQREGLIAKRGGTTRR.

The disordered stretch occupies residues 37–92; sequence QREGTFREMKRRNHYEKPSEKKARQKAEAIRRARKLARKRAQREGLIAKRGGTTRR. Basic and acidic residues predominate over residues 51–67; that stretch reads YEKPSEKKARQKAEAIR. Residues 68–77 are compositionally biased toward basic residues; it reads RARKLARKRA.

The protein belongs to the bacterial ribosomal protein bS21 family.

This chain is Small ribosomal subunit protein bS21, found in Maricaulis maris (strain MCS10) (Caulobacter maris).